A 348-amino-acid chain; its full sequence is NADH-ubiquinone oxidoreductase chain 2 (348 aa).

The next 10 membrane-spanning stretches (helical) occupy residues P3–G23, H25–I45, Y59–W79, A95–L115, L149–N171, I178–P198, S199–F219, V242–P262, S274–L294, and L324–L344.

It belongs to the complex I subunit 2 family.

Its subcellular location is the mitochondrion inner membrane. The enzyme catalyses a ubiquinone + NADH + 5 H(+)(in) = a ubiquinol + NAD(+) + 4 H(+)(out). Its function is as follows. Core subunit of the mitochondrial membrane respiratory chain NADH dehydrogenase (Complex I) that is believed to belong to the minimal assembly required for catalysis. Complex I functions in the transfer of electrons from NADH to the respiratory chain. The immediate electron acceptor for the enzyme is believed to be ubiquinone. This is NADH-ubiquinone oxidoreductase chain 2 (MT-ND2) from Scyliorhinus canicula (Small-spotted catshark).